The primary structure comprises 197 residues: Sialomucin core protein 24 (197 aa).

An N-terminal signal peptide occupies residues 1-23 (MSGSSRRLLWAATCLAVLCVSAA). At 24–162 (QPNITTLAPN…SQPERKSTFD (139 aa)) the chain is on the extracellular side. Residues asparagine 26, asparagine 33, asparagine 69, asparagine 75, asparagine 87, asparagine 98, asparagine 103, asparagine 120, and asparagine 146 are each glycosylated (N-linked (GlcNAc...) asparagine). The tract at residues 116–156 (PVPTNSTAKPTTRPSSPTPTPSVVTSAGTTNTTLTPTSQPE) is disordered. Low complexity predominate over residues 121-152 (STAKPTTRPSSPTPTPSVVTSAGTTNTTLTPT). The chain crosses the membrane as a helical span at residues 163–183 (AASFIGGIVLVLGVQAVIFFL). The Cytoplasmic segment spans residues 184-197 (YKFCKSKERNYHTL). The required for endosomal and lysosomal localization stretch occupies residues 191–197 (ERNYHTL).

The protein belongs to the CD164 family. In terms of assembly, interacts with CXCR4. In terms of processing, highly N- and O-glycosylated; contains sialic acid. Expressed at high levels in the submaxillary gland and kidney, at moderate levels in the brain, heart, lung, liver, intestine, testis, muscle and bone marrow, and at low levels in the pancreas, spleen and thymus. In the ear, expressed in the inner and outer hair cells of the organ of Corti, cells of Kolliker's organ, cells in the lateral cochlear wall behind the spiral prominence and cells of the stria vascularis.

It localises to the lysosome membrane. It is found in the endosome membrane. Its subcellular location is the cell membrane. Sialomucin that may play a key role in hematopoiesis. May be involved in cell adhesion. Promotes myogenesis by enhancing CXCR4-dependent cell motility. Positively regulates myoblast migration and promotes myoblast fusion into myotubes. This Mus musculus (Mouse) protein is Sialomucin core protein 24 (Cd164).